The chain runs to 197 residues: Probable NADPH:quinone oxidoreductase 1 (197 aa).

This sequence belongs to the SsuE family. As to quaternary structure, homotetramer. It depends on FMN as a cofactor.

The enzyme catalyses a quinone + NADH + H(+) = a quinol + NAD(+). It catalyses the reaction a quinone + NADPH + H(+) = a quinol + NADP(+). Functionally, the enzyme apparently serves as a quinone reductase in connection with conjugation reactions of hydroquinones involved in detoxification pathways. The polypeptide is Probable NADPH:quinone oxidoreductase 1 (Oryza sativa subsp. japonica (Rice)).